Reading from the N-terminus, the 138-residue chain is Brain natriuretic peptide (138 aa).

The first 22 residues, 1-22, serve as a signal peptide directing secretion; it reads MRLSSMWLCSLLLILKLQLSST. 2 disordered regions span residues 50–84 and 99–138; these read EQMA…AGLD and SVRN…PKQR. A disulfide bridge links C111 with C127.

It belongs to the natriuretic peptide family.

The protein resides in the secreted. Cardiac hormone which may function as a paracrine antifibrotic factor in the heart. Also plays a key role in cardiovascular homeostasis through natriuresis, diuresis, vasorelaxation, and inhibition of renin and aldosterone secretion. The sequence is that of Brain natriuretic peptide (nppb) from Oreochromis mossambicus (Mozambique tilapia).